Reading from the N-terminus, the 154-residue chain is Probable cyclic pyranopterin monophosphate synthase (154 aa).

Substrate contacts are provided by residues 74–76 (LCH) and 110–111 (ME). The active site involves aspartate 125.

Belongs to the MoaC family. As to quaternary structure, homohexamer; trimer of dimers.

It carries out the reaction (8S)-3',8-cyclo-7,8-dihydroguanosine 5'-triphosphate = cyclic pyranopterin phosphate + diphosphate. The protein operates within cofactor biosynthesis; molybdopterin biosynthesis. Catalyzes the conversion of (8S)-3',8-cyclo-7,8-dihydroguanosine 5'-triphosphate to cyclic pyranopterin monophosphate (cPMP). The protein is Probable cyclic pyranopterin monophosphate synthase of Methanosphaerula palustris (strain ATCC BAA-1556 / DSM 19958 / E1-9c).